A 566-amino-acid polypeptide reads, in one-letter code: Beta,beta-carotene 15,15'-dioxygenase (566 aa).

4 residues coordinate Fe cation: histidine 172, histidine 237, histidine 308, and histidine 514. Positions 530-566 are disordered; the sequence is PAETQEVENSDHPTDPTAPELSHSENDFTAGHGGSSL.

Belongs to the carotenoid oxygenase family. Fe(2+) serves as cofactor. As to expression, expressed in liver, kidney, small intestine and testis.

The protein resides in the cytoplasm. It localises to the cytosol. The enzyme catalyses all-trans-beta-carotene + O2 = 2 all-trans-retinal. It functions in the pathway cofactor metabolism; retinol metabolism. Functionally, symmetrically cleaves beta-carotene into two molecules of retinal using a dioxygenase mechanism. The polypeptide is Beta,beta-carotene 15,15'-dioxygenase (Mus musculus (Mouse)).